Reading from the N-terminus, the 45-residue chain is Photosystem II reaction center protein K (45 aa).

Positions 1–8 (MEAALLLA) are excised as a propeptide. A helical transmembrane segment spans residues 24 to 44 (LPIIPVFFLLLAFVWQAAVGF).

Belongs to the PsbK family. In terms of assembly, PSII is composed of 1 copy each of membrane proteins PsbA, PsbB, PsbC, PsbD, PsbE, PsbF, PsbH, PsbI, PsbJ, PsbK, PsbL, PsbM, PsbT, PsbX, PsbY, PsbZ, Psb30/Ycf12, peripheral proteins PsbO, CyanoQ (PsbQ), PsbU, PsbV and a large number of cofactors. It forms dimeric complexes.

It localises to the cellular thylakoid membrane. One of the components of the core complex of photosystem II (PSII). PSII is a light-driven water:plastoquinone oxidoreductase that uses light energy to abstract electrons from H(2)O, generating O(2) and a proton gradient subsequently used for ATP formation. It consists of a core antenna complex that captures photons, and an electron transfer chain that converts photonic excitation into a charge separation. In Nostoc sp. (strain PCC 7120 / SAG 25.82 / UTEX 2576), this protein is Photosystem II reaction center protein K.